The chain runs to 1210 residues: ATPase family AAA domain-containing protein At1g05910 (1210 aa).

Residues 1–11 are compositionally biased toward polar residues; the sequence is MHPKRSSQGDG. Disordered regions lie at residues 1-32 and 63-291; these read MHPKRSSQGDGSVTKPVRTSDRLRRRPKLHGR and LHKG…RTDD. Over residues 97–109 the composition is skewed to acidic residues; that stretch reads DYTDSSGAEDEDM. Residues 130–146 show a composition bias toward basic and acidic residues; sequence SRKDMDAELAPRREGLR. A compositionally biased stretch (acidic residues) spans 167–226; it reads DTSEEKDGQDETENGNELDDADDGENEVEAEDEGNGEDEGDGEDEGEEDGDDDEEGDEEQ. Residues 227–244 show a composition bias toward basic and acidic residues; sequence EGRKRYDLRNRAEVRRMP. Residues 276 to 286 are compositionally biased toward basic residues; the sequence is GGSRPHKRHRF. ATP is bound at residue 422 to 429; it reads GPPGTGKT. The interval 856-883 is disordered; the sequence is LNGKPDGPQPLPELPKVPKEPTGPKPAE. Residues 897-1000 form the Bromo domain; it reads RLRMCLRDVC…DVVHGMLSQM (104 aa). The span at 1057 to 1070 shows a compositional bias: basic and acidic residues; that stretch reads DRDYEGLKKPKKTT. Positions 1057 to 1151 are disordered; that stretch reads DRDYEGLKKP…EISSRTESVK (95 aa). A compositionally biased stretch (polar residues) spans 1080-1090; the sequence is DKSQNQDSGQE. Composition is skewed to basic and acidic residues over residues 1108-1123 and 1138-1151; these read DGDREDQSEPPSKEAS and KSDKEISSRTESVK.

Belongs to the AAA ATPase family.

The protein is ATPase family AAA domain-containing protein At1g05910 of Arabidopsis thaliana (Mouse-ear cress).